The sequence spans 226 residues: Large ribosomal subunit protein uL1 (226 aa).

Belongs to the universal ribosomal protein uL1 family. Part of the 50S ribosomal subunit.

Functionally, binds directly to 23S rRNA. The L1 stalk is quite mobile in the ribosome, and is involved in E site tRNA release. Its function is as follows. Protein L1 is also a translational repressor protein, it controls the translation of the L11 operon by binding to its mRNA. In Borreliella burgdorferi (strain ZS7) (Borrelia burgdorferi), this protein is Large ribosomal subunit protein uL1.